A 91-amino-acid chain; its full sequence is DNA-directed RNA polymerase subunit omega (91 aa).

Belongs to the RNA polymerase subunit omega family. In terms of assembly, the RNAP catalytic core consists of 2 alpha, 1 beta, 1 beta' and 1 omega subunit. When a sigma factor is associated with the core the holoenzyme is formed, which can initiate transcription.

It carries out the reaction RNA(n) + a ribonucleoside 5'-triphosphate = RNA(n+1) + diphosphate. In terms of biological role, promotes RNA polymerase assembly. Latches the N- and C-terminal regions of the beta' subunit thereby facilitating its interaction with the beta and alpha subunits. The protein is DNA-directed RNA polymerase subunit omega of Edwardsiella ictaluri (strain 93-146).